We begin with the raw amino-acid sequence, 691 residues long: MSTLQHKTSSARRSSRRSVAAPDFVAVSRIPIVEVSPQLLDGTAPVKSTVDESFPVQATIFREGHDKFAARAVLVDGAGHTVDSVPMCDVSPGLFRFEGWLTPRVPGPHRFFVEAWSDPYATWLHNAEIKVPAGIDVGLVFAEAEVLFKAALKGTPVRSGERAAIRDALTVISKRRALPEVKLAAARSEEVRAAFAAYPVKELVSRSREYPVFVDRVRALVGSWYELFPRSVGATRDSESGEWTSGTLRTAATDLDRVAGMGFDVVYIPPVHPIGLTNRKGRNNSLTAVPGDPGSPYAIGSDAAGGHDAIEPSLGTFEDFDVFVGRAHELGMEVALDLALQCSPDHPWVKEHPEWFTARPDGTIAYAENPPKKYQDIYPLNFDNDPEGIYKEIKRVVELWVAHGVTIFRVDNPHTKPVGFWQRLLAEFRVEHPEVIFLAEAFTNPPMMQTLGTVGFHQSYTYFTWRNERQEIEEYLMEVSHESSHRMRPAFWPTTHDILTPYIQRGGISAAAIRAILAATGSPTWGIYNGYELIENIARPGAEEHIDNEKYEFKPRNYALAEQNGMATLLTMLNSIRSKHKALQRLRNVTINPTSNDKIVSFTKVARPEETADGVMDAVIVVVNLDPYASRDATVYLDLSPFGISPRWDGGPIIEVTDEMSGETYLWNEAPYVHLDPHGQVAHVLSVKVLS.

Residues K280, Q341, and D376 each contribute to the alpha-maltose 1-phosphate site. Residue D411 is the Nucleophile of the active site. Residue N412 coordinates alpha-maltose 1-phosphate. The active-site Proton donor is the E440. 550–551 (KY) serves as a coordination point for alpha-maltose 1-phosphate.

This sequence belongs to the glycosyl hydrolase 13 family. GlgE subfamily. Homodimer.

It carries out the reaction alpha-maltose 1-phosphate + [(1-&gt;4)-alpha-D-glucosyl](n) = [(1-&gt;4)-alpha-D-glucosyl](n+2) + phosphate. Functionally, maltosyltransferase that uses maltose 1-phosphate (M1P) as the sugar donor to elongate linear or branched alpha-(1-&gt;4)-glucans. Is involved in a branched alpha-glucan biosynthetic pathway from trehalose, together with TreS, Mak and GlgB. In Arcanobacterium haemolyticum (strain ATCC 9345 / DSM 20595 / CCM 5947 / CCUG 17215 / LMG 16163 / NBRC 15585 / NCTC 8452 / 11018), this protein is Alpha-1,4-glucan:maltose-1-phosphate maltosyltransferase.